Consider the following 598-residue polypeptide: MANDTRQVVQGVQEMTPSEAFVETMVANGVTEIFGIMGSAFMDAMDIFAPAGIKLIPVVHEQGAAHMADGFARVSGRTGVVIGQNGPGISNCVTAIAAAYWAHTPVVIVTPEAGTTGIGLGGFQEARQLPMFQEFTKYQGHVTHPARMAEYTARCFARARDEMGPAQLNIPRDYFYGKIKCEIPLPQPLDRGPGGAQSLDAAARLLAEAKFPVIISGGGVVMGDAVEECKALAERLGAPVVNSYLHNDSFPASHPLWCGPLGYQGSKAAMKLLADADVVLALGTRLGPFGTLPQHGLDYWPKNARIIQVDADSKMLGLVKKITVGVCGDAKASAAEISRRIDGMKLACDANKAERAARIQAEKDAWEQELTDWTHERDPFSLDMIEEQSKEEGNWLHPRQVLRELEKAMPEDVMVSTDIGNINSVANSYLRFEKPRSFFAAMSWGNCGYAFPTIIGAKVAAPHRPAVSYAGDGAWGMSMSEIMTCVRHDIPVTAVVFHNRQWGAEKKNQVDFYNRRFVAGELESESFAGIARAMGAEGVVVDRIEDVGPALKKAIDAQMNDRKTTVIEIMCTRELGDPFRRDALSKPVRLLEKYRDYT.

The protein belongs to the TPP enzyme family. Homotetramer. Requires Mg(2+) as cofactor. Thiamine diphosphate serves as cofactor.

Its subcellular location is the cytoplasm. The enzyme catalyses acetyl phosphate + sulfite + H(+) = sulfoacetaldehyde + phosphate. Its pathway is organosulfur degradation; taurine degradation via aerobic pathway; acetyl phosphate and sulfite from taurine: step 2/2. The chain is Sulfoacetaldehyde acetyltransferase from Castellaniella defragrans (Alcaligenes defragrans).